Here is a 247-residue protein sequence, read N- to C-terminus: Protein ABHD14A (247 aa).

Residues 11-31 (AALLGLGLLLVFLLYMGLPGP) form a helical; Signal-anchor for type II membrane protein membrane-spanning segment. An N-linked (GlcNAc...) asparagine glycan is attached at asparagine 43. Catalysis depends on charge relay system residues serine 147, aspartate 198, and histidine 225.

The protein belongs to the AB hydrolase superfamily. ABHD14 family. In terms of tissue distribution, widely expressed. Higher expression is detected in brain, kidney, heart, testis, ovary and uterus.

Its subcellular location is the cytoplasm. It localises to the membrane. Possible role in granule neuron development. In Mus musculus (Mouse), this protein is Protein ABHD14A.